A 453-amino-acid chain; its full sequence is Bifunctional protein GlmU (453 aa).

The interval 1–225 is pyrophosphorylase; the sequence is MNIVILAAGT…EWETLGVNSK (225 aa). UDP-N-acetyl-alpha-D-glucosamine is bound by residues 6-9, lysine 20, glutamine 71, 76-77, 98-100, glycine 135, glutamate 150, asparagine 165, and asparagine 223; these read LAAG, GT, and YGD. Aspartate 100 serves as a coordination point for Mg(2+). Mg(2+) is bound at residue asparagine 223. A linker region spans residues 226–246; it reads AQLAELERIHQRNVADALLAD. An N-acetyltransferase region spans residues 247-453; it reads GVTLADPARI…GYVRPVKKKS (207 aa). Arginine 329 and lysine 347 together coordinate UDP-N-acetyl-alpha-D-glucosamine. Histidine 359 serves as the catalytic Proton acceptor. Positions 362 and 373 each coordinate UDP-N-acetyl-alpha-D-glucosamine. Residues alanine 376, 382–383, serine 401, and alanine 419 contribute to the acetyl-CoA site; that span reads NY.

This sequence in the N-terminal section; belongs to the N-acetylglucosamine-1-phosphate uridyltransferase family. The protein in the C-terminal section; belongs to the transferase hexapeptide repeat family. In terms of assembly, homotrimer. It depends on Mg(2+) as a cofactor.

It is found in the cytoplasm. It carries out the reaction alpha-D-glucosamine 1-phosphate + acetyl-CoA = N-acetyl-alpha-D-glucosamine 1-phosphate + CoA + H(+). The enzyme catalyses N-acetyl-alpha-D-glucosamine 1-phosphate + UTP + H(+) = UDP-N-acetyl-alpha-D-glucosamine + diphosphate. It participates in nucleotide-sugar biosynthesis; UDP-N-acetyl-alpha-D-glucosamine biosynthesis; N-acetyl-alpha-D-glucosamine 1-phosphate from alpha-D-glucosamine 6-phosphate (route II): step 2/2. The protein operates within nucleotide-sugar biosynthesis; UDP-N-acetyl-alpha-D-glucosamine biosynthesis; UDP-N-acetyl-alpha-D-glucosamine from N-acetyl-alpha-D-glucosamine 1-phosphate: step 1/1. It functions in the pathway bacterial outer membrane biogenesis; LPS lipid A biosynthesis. Catalyzes the last two sequential reactions in the de novo biosynthetic pathway for UDP-N-acetylglucosamine (UDP-GlcNAc). The C-terminal domain catalyzes the transfer of acetyl group from acetyl coenzyme A to glucosamine-1-phosphate (GlcN-1-P) to produce N-acetylglucosamine-1-phosphate (GlcNAc-1-P), which is converted into UDP-GlcNAc by the transfer of uridine 5-monophosphate (from uridine 5-triphosphate), a reaction catalyzed by the N-terminal domain. This Burkholderia multivorans (strain ATCC 17616 / 249) protein is Bifunctional protein GlmU.